The chain runs to 278 residues: Bis(5'-nucleosyl)-tetraphosphatase, symmetrical (278 aa).

This sequence belongs to the Ap4A hydrolase family.

The catalysed reaction is P(1),P(4)-bis(5'-adenosyl) tetraphosphate + H2O = 2 ADP + 2 H(+). Hydrolyzes diadenosine 5',5'''-P1,P4-tetraphosphate to yield ADP. This chain is Bis(5'-nucleosyl)-tetraphosphatase, symmetrical, found in Nitrosococcus oceani (strain ATCC 19707 / BCRC 17464 / JCM 30415 / NCIMB 11848 / C-107).